Consider the following 414-residue polypeptide: Procollagen C-endopeptidase enhancer 2 (414 aa).

Positions 1 to 22 (MGGASACIPLCLLLATARMARP) are cleaved as a signal peptide. 7 cysteine pairs are disulfide-bonded: Cys32/Cys58, Cys85/Cys106, Cys153/Cys180, Cys207/Cys230, Cys296/Cys363, Cys300/Cys366, and Cys311/Cys414. 2 consecutive CUB domains span residues 32–143 (CGGI…YSAA) and 153–267 (CGGR…YKFR). One can recognise an NTR domain in the interval 296-414 (CQQKCRRMGT…PMNALKNKQC (119 aa)). The N-linked (GlcNAc...) asparagine glycan is linked to Asn354.

In terms of assembly, interacts with heparin with high affinity, and type I or II collagen. Post-translationally, O-glycosylated; contains sialic acid.

It is found in the secreted. Functionally, binds to the C-terminal propeptide of types I and II procollagens and may enhance the cleavage of that propeptide by BMP1. In Mus musculus (Mouse), this protein is Procollagen C-endopeptidase enhancer 2 (Pcolce2).